We begin with the raw amino-acid sequence, 44 residues long: Protein PsbN (44 aa).

A helical membrane pass occupies residues F6–I26.

The protein belongs to the PsbN family.

The protein resides in the plastid. Its subcellular location is the chloroplast thylakoid membrane. May play a role in photosystem I and II biogenesis. This is Protein PsbN from Ostreococcus tauri.